The primary structure comprises 210 residues: Uracil phosphoribosyltransferase (210 aa).

5-phospho-alpha-D-ribose 1-diphosphate is bound by residues R78, R103, and 130-138; that span reads DPMLATGGS. Uracil-binding positions include I193 and 198-200; that span reads GDA. D199 is a 5-phospho-alpha-D-ribose 1-diphosphate binding site.

The protein belongs to the UPRTase family. It depends on Mg(2+) as a cofactor.

It carries out the reaction UMP + diphosphate = 5-phospho-alpha-D-ribose 1-diphosphate + uracil. Its pathway is pyrimidine metabolism; UMP biosynthesis via salvage pathway; UMP from uracil: step 1/1. Its activity is regulated as follows. Allosterically activated by GTP. Catalyzes the conversion of uracil and 5-phospho-alpha-D-ribose 1-diphosphate (PRPP) to UMP and diphosphate. The protein is Uracil phosphoribosyltransferase of Salinibacter ruber (strain DSM 13855 / M31).